Reading from the N-terminus, the 149-residue chain is Large ribosomal subunit protein bL9 (149 aa).

This sequence belongs to the bacterial ribosomal protein bL9 family.

In terms of biological role, binds to the 23S rRNA. The chain is Large ribosomal subunit protein bL9 from Glaesserella parasuis serovar 5 (strain SH0165) (Haemophilus parasuis).